The primary structure comprises 423 residues: D-tagatose-1,6-bisphosphate aldolase subunit GatZ (423 aa).

The protein belongs to the GatZ/KbaZ family. GatZ subfamily. As to quaternary structure, forms a complex with GatY.

It functions in the pathway carbohydrate metabolism; D-tagatose 6-phosphate degradation; D-glyceraldehyde 3-phosphate and glycerone phosphate from D-tagatose 6-phosphate: step 2/2. Functionally, component of the tagatose-1,6-bisphosphate aldolase GatYZ that is required for full activity and stability of the Y subunit. Could have a chaperone-like function for the proper and stable folding of GatY. When expressed alone, GatZ does not show any aldolase activity. Is involved in the catabolism of galactitol. The sequence is that of D-tagatose-1,6-bisphosphate aldolase subunit GatZ from Klebsiella pneumoniae subsp. pneumoniae (strain ATCC 700721 / MGH 78578).